The primary structure comprises 354 residues: Replication factor C subunit 5 (354 aa).

Residues Val5, Ser17, 43 to 51, and Arg231 each bind ATP; that span reads GPNGTGKKT.

This sequence belongs to the activator 1 small subunits family. In terms of assembly, replication factor C (RFC) is a heteropentamer of subunits RFC1, RFC2, RFC3, RFC4 and RFC5 and forms a complex with POL30/PCNA in the presence of ATP. Component of the RAD24-RFC complex which consists of RAD24, RFC2, RFC3, RFC4 and RFC5 and associates with the checkpoint clamp DDC1:MEC3:RAD17 complex. Component of the ELG1-RFC complex which consists of ELG1, RFC2, RFC3, RFC4 and RFC5. Component of the CTF18-RFC complex, which consists of CTF18, CTF8, DCC1, RFC2, RFC3, RFC4 and RFC5. RFC5 interacts with ECO1.

Its subcellular location is the nucleus. Functionally, component of ATP-dependent clamp loader (RFC and RFC-like) complexes for DNA clamps, such as the POL30/PCNA homotrimer and the checkpoint clamp DDC1:MEC3:RAD17 complex. During a clamp loading circle, the RFC:clamp complex binds to DNA and the recognition of the double-stranded/single-stranded junction stimulates ATP hydrolysis by RFC. The complex presumably provides bipartite ATP sites in which one subunit supplies a catalytic site for hydrolysis of ATP bound to the neighboring subunit. Dissociation of RFC from the clamp leaves the clamp encircling DNA. Component of the replication factor C (RFC or activator 1) complex which loads POL30/PCNA and acts during elongation of primed DNA templates by DNA polymerase delta and epsilon. RFC has an essential but redundant activity in sister chromatid cohesion establishment. Component of the RFC-like complex CTF18-RFC which is required for efficient establishment of chromosome cohesion during S-phase and may load or unload POL30/PCNA. Component of the RFC-like RAD24-RFC complex which loads the checkpoint clamp DDC1:MEC3:RAD17 complex and is involved in DNA repair pathways. Component of the RFC-like ELG1-RFC complex which appears to have a role in DNA replication, replication fork re-start, recombination and repair. This Saccharomyces cerevisiae (strain ATCC 204508 / S288c) (Baker's yeast) protein is Replication factor C subunit 5 (RFC5).